We begin with the raw amino-acid sequence, 879 residues long: Phosphoenolpyruvate carboxylase (879 aa).

Active-site residues include His137 and Lys545.

Belongs to the PEPCase type 1 family. Requires Mg(2+) as cofactor.

It catalyses the reaction oxaloacetate + phosphate = phosphoenolpyruvate + hydrogencarbonate. In terms of biological role, forms oxaloacetate, a four-carbon dicarboxylic acid source for the tricarboxylic acid cycle. This chain is Phosphoenolpyruvate carboxylase, found in Yersinia enterocolitica serotype O:8 / biotype 1B (strain NCTC 13174 / 8081).